We begin with the raw amino-acid sequence, 187 residues long: dCTP deaminase (187 aa).

Residues 110–115 (KSTYAR), 134–136 (TLE), Q155, Y169, and Q179 contribute to the dCTP site. The active-site Proton donor/acceptor is E136.

It belongs to the dCTP deaminase family. In terms of assembly, homotrimer.

It catalyses the reaction dCTP + H2O + H(+) = dUTP + NH4(+). Its pathway is pyrimidine metabolism; dUMP biosynthesis; dUMP from dCTP (dUTP route): step 1/2. Catalyzes the deamination of dCTP to dUTP. The chain is dCTP deaminase from Bordetella bronchiseptica (strain ATCC BAA-588 / NCTC 13252 / RB50) (Alcaligenes bronchisepticus).